Consider the following 154-residue polypeptide: UPF0178 protein SSP2038 (154 aa).

This sequence belongs to the UPF0178 family.

In Staphylococcus saprophyticus subsp. saprophyticus (strain ATCC 15305 / DSM 20229 / NCIMB 8711 / NCTC 7292 / S-41), this protein is UPF0178 protein SSP2038.